Consider the following 295-residue polypeptide: sn-glycerol-3-phosphate transport system permease protein UgpA (295 aa).

At 1-11 (MTSSRPVFRSS) the chain is on the cytoplasmic side. A helical membrane pass occupies residues 12 to 32 (WLPYVLVLPQLLITVIFFIWP). Residues 33-76 (AGQALWYSVQNLDPFGLSSEFVGMENFRQLFNNPYYLDSFYTTL) are Periplasmic-facing. The region spanning 76–284 (LIFSFLVAGF…LLVIGLTVIQ (209 aa)) is the ABC transmembrane type-1 domain. The chain crosses the membrane as a helical span at residues 77–97 (IFSFLVAGFGMLISLFLAALV). The Cytoplasmic portion of the chain corresponds to 98-109 (DYVIRASRLYQT). Residues 110–130 (LIILPYAVAPAVAAVLWMFLF) form a helical membrane-spanning segment. Topologically, residues 131–157 (NPGLGLITHFLGLLGYTWNHAQDSGQA) are periplasmic. A helical transmembrane segment spans residues 158–178 (MFLVVLASVWKQISYNFLFFL). The Cytoplasmic segment spans residues 179–207 (AALQSIPRSLVEAGAIDGAGPVRRFFNLV). A helical membrane pass occupies residues 208–228 (LPMISPVSFFLLVVNLVYAFF). The Periplasmic portion of the chain corresponds to 229–262 (DTFPIIDAATAGGPVQSTTTLIYKIYREGFAGLD). Residues 263 to 283 (LSSSAAQSVILMLLVIGLTVI) form a helical membrane-spanning segment. Residues 284–295 (QFRFVERKVNYQ) are Cytoplasmic-facing.

Belongs to the binding-protein-dependent transport system permease family. UgpAE subfamily. As to quaternary structure, the complex is composed of two ATP-binding proteins (UgpC), two transmembrane proteins (UgpA and UgpE) and a solute-binding protein (UgpB).

The protein localises to the cell inner membrane. In terms of biological role, part of the ABC transporter complex UgpBAEC involved in sn-glycerol-3-phosphate (G3P) import. Probably responsible for the translocation of the substrate across the membrane. The chain is sn-glycerol-3-phosphate transport system permease protein UgpA (ugpA) from Pectobacterium atrosepticum (strain SCRI 1043 / ATCC BAA-672) (Erwinia carotovora subsp. atroseptica).